The primary structure comprises 401 residues: Elongation factor Tu (401 aa).

In terms of domain architecture, tr-type G spans 10–211; it reads KPHLNIGTIG…AVDTYVPNPT (202 aa). The G1 stretch occupies residues 19–26; sequence GHVDHGKT. 19–26 contacts GTP; that stretch reads GHVDHGKT. Threonine 26 serves as a coordination point for Mg(2+). The segment at 62–66 is G2; that stretch reads GITIA. Positions 83 to 86 are G3; that stretch reads DCPG. GTP is bound by residues 83–87 and 138–141; these read DCPGH and NKAD. The segment at 138–141 is G4; sequence NKAD. A G5 region spans residues 179 to 181; sequence SAL.

Belongs to the TRAFAC class translation factor GTPase superfamily. Classic translation factor GTPase family. EF-Tu/EF-1A subfamily. Monomer.

It is found in the cytoplasm. The enzyme catalyses GTP + H2O = GDP + phosphate + H(+). Its function is as follows. GTP hydrolase that promotes the GTP-dependent binding of aminoacyl-tRNA to the A-site of ribosomes during protein biosynthesis. This chain is Elongation factor Tu, found in Leptospira biflexa serovar Patoc (strain Patoc 1 / Ames).